A 422-amino-acid chain; its full sequence is Replication factor C large subunit (422 aa).

63-70 (GPPGVGKT) lines the ATP pocket.

It belongs to the activator 1 small subunits family. RfcL subfamily. As to quaternary structure, heteromultimer composed of small subunits (RfcS) and large subunits (RfcL).

Part of the RFC clamp loader complex which loads the PCNA sliding clamp onto DNA. This is Replication factor C large subunit from Pyrobaculum aerophilum (strain ATCC 51768 / DSM 7523 / JCM 9630 / CIP 104966 / NBRC 100827 / IM2).